We begin with the raw amino-acid sequence, 568 residues long: Urease subunit alpha (568 aa).

The Urease domain occupies 131–568; the sequence is GGMDAHIHFI…LPLAQRYFLY (438 aa). 3 residues coordinate Ni(2+): His136, His138, and Lys219. Position 219 is an N6-carboxylysine (Lys219). His221 contributes to the substrate binding site. Positions 248 and 274 each coordinate Ni(2+). The Proton donor role is filled by His322. Residue Asp362 participates in Ni(2+) binding.

The protein belongs to the metallo-dependent hydrolases superfamily. Urease alpha subunit family. As to quaternary structure, heterotrimer of UreA (gamma), UreB (beta) and UreC (alpha) subunits. Three heterotrimers associate to form the active enzyme. The cofactor is Ni cation. Post-translationally, carboxylation allows a single lysine to coordinate two nickel ions.

The protein resides in the cytoplasm. It catalyses the reaction urea + 2 H2O + H(+) = hydrogencarbonate + 2 NH4(+). The protein operates within nitrogen metabolism; urea degradation; CO(2) and NH(3) from urea (urease route): step 1/1. This Cereibacter sphaeroides (strain KD131 / KCTC 12085) (Rhodobacter sphaeroides) protein is Urease subunit alpha.